Reading from the N-terminus, the 500-residue chain is Cholesterol 24-hydroxylase (500 aa).

Residues 3–23 (PGLLLLGSAVLLAFGLCCTFV) traverse the membrane as a helical segment. Cys437 contributes to the heme binding site.

Belongs to the cytochrome P450 family. Heme is required as a cofactor. In terms of tissue distribution, expressed in brain. The mRNA was broadly distributed with higher levels in gray matter zones and lower levels in regions rich in white matter. Not detected in fetal sample but its expression increases linearly with age.

It localises to the endoplasmic reticulum membrane. The protein resides in the microsome membrane. Its subcellular location is the postsynapse. The protein localises to the presynapse. It is found in the cell projection. It localises to the dendrite. The enzyme catalyses cholesterol + reduced [NADPH--hemoprotein reductase] + O2 = (24S)-hydroxycholesterol + oxidized [NADPH--hemoprotein reductase] + H2O + H(+). It catalyses the reaction cholestanol + reduced [NADPH--hemoprotein reductase] + O2 = (24S)-hydroxycholestanol + oxidized [NADPH--hemoprotein reductase] + H2O + H(+). The catalysed reaction is 7-dehydrocholesterol + reduced [NADPH--hemoprotein reductase] + O2 = cholesta-5,7-dien-3beta,24S-diol + oxidized [NADPH--hemoprotein reductase] + H2O + H(+). It carries out the reaction 7-dehydrocholesterol + reduced [NADPH--hemoprotein reductase] + O2 = cholesta-5,7-dien-3beta,25-diol + oxidized [NADPH--hemoprotein reductase] + H2O + H(+). The enzyme catalyses desmosterol + reduced [NADPH--hemoprotein reductase] + O2 = (24Z),26-hydroxydesmosterol + oxidized [NADPH--hemoprotein reductase] + H2O + H(+). It catalyses the reaction desmosterol + reduced [NADPH--hemoprotein reductase] + O2 = (24S)-25-epoxycholesterol + oxidized [NADPH--hemoprotein reductase] + H2O + H(+). The catalysed reaction is 4beta-hydroxycholesterol + reduced [NADPH--hemoprotein reductase] + O2 = 4beta,24S-dihydroxycholesterol + oxidized [NADPH--hemoprotein reductase] + H2O + H(+). It carries out the reaction (24S)-hydroxycholesterol + reduced [NADPH--hemoprotein reductase] + O2 = (24S,25R)-24,26-dihydroxycholesterol + oxidized [NADPH--hemoprotein reductase] + H2O + H(+). The enzyme catalyses (24S)-hydroxycholesterol + reduced [NADPH--hemoprotein reductase] + O2 = 24S,25-dihydroxycholesterol + oxidized [NADPH--hemoprotein reductase] + H2O + H(+). It catalyses the reaction 7alpha-hydroxycholesterol + reduced [NADPH--hemoprotein reductase] + O2 = (24S)-7alpha-dihydroxycholesterol + oxidized [NADPH--hemoprotein reductase] + H2O + H(+). The catalysed reaction is progesterone + reduced [NADPH--hemoprotein reductase] + O2 = 17alpha-hydroxyprogesterone + oxidized [NADPH--hemoprotein reductase] + H2O + H(+). It carries out the reaction testosterone + reduced [NADPH--hemoprotein reductase] + O2 = 16beta,17beta-dihydroxyandrost-4-en-3-one + oxidized [NADPH--hemoprotein reductase] + H2O + H(+). The enzyme catalyses testosterone + reduced [NADPH--hemoprotein reductase] + O2 = 2-hydroxytestosterone + oxidized [NADPH--hemoprotein reductase] + H2O + H(+). It catalyses the reaction testosterone + reduced [NADPH--hemoprotein reductase] + O2 = 6beta,17beta-dihydroxyandrost-4-en-3-one + oxidized [NADPH--hemoprotein reductase] + H2O + H(+). It participates in steroid metabolism; cholesterol degradation. It functions in the pathway lipid metabolism; C21-steroid hormone metabolism. Functionally, P450 monooxygenase that plays a major role in cholesterol homeostasis in the brain. Primarily catalyzes the hydroxylation (with S stereochemistry) at C-24 of cholesterol side chain, triggering cholesterol diffusion out of neurons and its further degradation. By promoting constant cholesterol elimination in neurons, may activate the mevalonate pathway and coordinate the synthesis of new cholesterol and nonsterol isoprenoids involved in synaptic activity and learning. Further hydroxylates cholesterol derivatives and hormone steroids on both the ring and side chain of these molecules, converting them into active oxysterols involved in lipid signaling and biosynthesis. Acts as an epoxidase converting cholesta-5,24-dien-3beta-ol/desmosterol into (24S),25-epoxycholesterol, an abundant lipid ligand of nuclear NR1H2 and NR1H3 receptors shown to promote neurogenesis in developing brain. May also catalyze the oxidative metabolism of xenobiotics, such as clotrimazole. This is Cholesterol 24-hydroxylase from Homo sapiens (Human).